A 410-amino-acid chain; its full sequence is F-box/WD-40 repeat-containing protein 1 (410 aa).

The 48-residue stretch at 32–79 (SKECSLLPFELFEEILCRVPTKSLLRLKLTCKRWLALFNDKRFIYKHL) folds into the F-box domain. WD repeat units lie at residues 109–150 (PNKF…VRWI) and 269–309 (DVHN…NGVS).

The chain is F-box/WD-40 repeat-containing protein 1 (FBW1) from Arabidopsis thaliana (Mouse-ear cress).